The sequence spans 322 residues: Acetyl-coenzyme A carboxylase carboxyl transferase subunit alpha (322 aa).

Positions 39–293 (RLQKKSQALT…RRALTDTLAE (255 aa)) constitute a CoA carboxyltransferase C-terminal domain.

The protein belongs to the AccA family. As to quaternary structure, acetyl-CoA carboxylase is a heterohexamer composed of biotin carboxyl carrier protein (AccB), biotin carboxylase (AccC) and two subunits each of ACCase subunit alpha (AccA) and ACCase subunit beta (AccD).

It localises to the cytoplasm. The enzyme catalyses N(6)-carboxybiotinyl-L-lysyl-[protein] + acetyl-CoA = N(6)-biotinyl-L-lysyl-[protein] + malonyl-CoA. It participates in lipid metabolism; malonyl-CoA biosynthesis; malonyl-CoA from acetyl-CoA: step 1/1. Its function is as follows. Component of the acetyl coenzyme A carboxylase (ACC) complex. First, biotin carboxylase catalyzes the carboxylation of biotin on its carrier protein (BCCP) and then the CO(2) group is transferred by the carboxyltransferase to acetyl-CoA to form malonyl-CoA. This chain is Acetyl-coenzyme A carboxylase carboxyl transferase subunit alpha, found in Thiobacillus denitrificans (strain ATCC 25259 / T1).